The primary structure comprises 324 residues: E3 ubiquitin-protein ligase SIAH2 (324 aa).

The segment covering 1 to 15 (MSRPSSTGPSANKPC) has biased composition (polar residues). The disordered stretch occupies residues 1–42 (MSRPSSTGPSANKPCSKQPPPQPQHTPSPAAPPAAATISAAG). At Ser6 the chain carries Phosphoserine. A Phosphoserine; by DYRK2 modification is found at Ser16. A compositionally biased stretch (pro residues) spans 17-32 (KQPPPQPQHTPSPAAP). Residue Thr26 is modified to Phosphothreonine; by DYRK2. Phosphoserine; by DYRK2 and MAPK14 is present on Ser28. Residues 33–42 (PAAATISAAG) are compositionally biased toward low complexity. Phosphoserine; by DYRK2 is present on Ser68. An RING-type zinc finger spans residues 80-115 (CPVCFDYVLPPILQCQAGHLVCNQCRQKLSCCPTCR). The residue at position 119 (Thr119) is a Phosphothreonine; by DYRK2. The interval 130–322 (VASAVLFPCK…LGINVTISTC (193 aa)) is SBD. The SIAH-type zinc finger occupies 133–193 (AVLFPCKYAT…VMSHLMHAHK (61 aa)). Positions 138, 145, 157, 161, 168, 175, 187, and 192 each coordinate Zn(2+).

This sequence belongs to the SINA (Seven in absentia) family. As to quaternary structure, homodimer. Interacts with UBE2E2. Interacts with PEG3. Interacts with VAV1, without mediating its ubiquitin-mediated degradation. Interacts with CACYBP/SIP. Probable component of some large E3 complex possibly composed of UBE2D1, SIAH2, CACYBP/SIP, SKP1, APC and TBL1X. Interacts with PEG10, which may inhibit its activity. Interacts with EGLN2 and SNCAIP. Interacts with DYRK2. Interacts with NR1D1 and NR1D2. Interacts with DCC. Interacts with AXIN1. In terms of processing, phosphorylated at Ser-28 by MAPK14, which mediates the degradation by the proteasome of EGLN3. Phosphorylated at Ser-28 by DYRK2; this increases the ubiquitin ligase activity and promotes degradation of EGLN3. As to expression, widely expressed at low level.

It localises to the cytoplasm. The protein localises to the nucleus. The enzyme catalyses S-ubiquitinyl-[E2 ubiquitin-conjugating enzyme]-L-cysteine + [acceptor protein]-L-lysine = [E2 ubiquitin-conjugating enzyme]-L-cysteine + N(6)-ubiquitinyl-[acceptor protein]-L-lysine.. It participates in protein modification; protein ubiquitination. Its activity is regulated as follows. Inhibited by interaction with SNCAIP (isoform 2, but not isoform 1). May be inhibited by interaction with PEG10. In terms of biological role, E3 ubiquitin-protein ligase that mediates ubiquitination and subsequent proteasomal degradation of target proteins. E3 ubiquitin ligases accept ubiquitin from an E2 ubiquitin-conjugating enzyme in the form of a thioester and then directly transfers the ubiquitin to targeted substrates. Mediates E3 ubiquitin ligase activity either through direct binding to substrates or by functioning as the essential RING domain subunit of larger E3 complexes. Triggers the ubiquitin-mediated degradation of many substrates, including proteins involved in transcription regulation (GPS2, POU2AF1, PML, NCOR1), a cell surface receptor (DCC), an antiapoptotic protein (BAG1), and a protein involved in synaptic vesicle function in neurons (SYP). Mediates ubiquitination and proteasomal degradation of DYRK2 in response to hypoxia. It is thereby involved in apoptosis, tumor suppression, cell cycle, transcription and signaling processes. Has some overlapping function with SIAH1. Triggers the ubiquitin-mediated degradation of TRAF2, whereas SIAH1 does not. Promotes monoubiquitination of SNCA. Regulates cellular clock function via ubiquitination of the circadian transcriptional repressors NR1D1 and NR1D2 leading to their proteasomal degradation. Plays an important role in mediating the rhythmic degradation/clearance of NR1D1 and NR1D2 contributing to their circadian profile of protein abundance. Mediates ubiquitination and degradation of EGLN2 and EGLN3 in response to the unfolded protein response (UPR), leading to their degradation and subsequent stabilization of ATF4. Also part of the Wnt signaling pathway in which it mediates the Wnt-induced ubiquitin-mediated proteasomal degradation of AXIN1. This Homo sapiens (Human) protein is E3 ubiquitin-protein ligase SIAH2 (SIAH2).